The chain runs to 378 residues: Biotin synthase, mitochondrial (378 aa).

The transit peptide at 1-26 (MMLVRSVFRSQLRPSVSGGLQSASCY) directs the protein to the mitochondrion. The Radical SAM core domain maps to 79–308 (REVQQCTLLS…KAMVRLSAGR (230 aa)). 3 residues coordinate [4Fe-4S] cluster: Cys-94, Cys-98, and Cys-101. [2Fe-2S] cluster-binding residues include Cys-138, Cys-171, Cys-231, and Arg-303. The segment at 357–378 (PPSFSEDDSESENCEKVASASH) is disordered.

This sequence belongs to the radical SAM superfamily. Biotin synthase family. The cofactor is [4Fe-4S] cluster. [2Fe-2S] cluster serves as cofactor.

Its subcellular location is the mitochondrion. It carries out the reaction (4R,5S)-dethiobiotin + (sulfur carrier)-SH + 2 reduced [2Fe-2S]-[ferredoxin] + 2 S-adenosyl-L-methionine = (sulfur carrier)-H + biotin + 2 5'-deoxyadenosine + 2 L-methionine + 2 oxidized [2Fe-2S]-[ferredoxin]. It functions in the pathway cofactor biosynthesis; biotin biosynthesis; biotin from 7,8-diaminononanoate: step 2/2. The polypeptide is Biotin synthase, mitochondrial (BIO2) (Arabidopsis thaliana (Mouse-ear cress)).